A 480-amino-acid chain; its full sequence is Aspartyl/glutamyl-tRNA(Asn/Gln) amidotransferase subunit B (480 aa).

It belongs to the GatB/GatE family. GatB subfamily. In terms of assembly, heterotrimer of A, B and C subunits.

It carries out the reaction L-glutamyl-tRNA(Gln) + L-glutamine + ATP + H2O = L-glutaminyl-tRNA(Gln) + L-glutamate + ADP + phosphate + H(+). It catalyses the reaction L-aspartyl-tRNA(Asn) + L-glutamine + ATP + H2O = L-asparaginyl-tRNA(Asn) + L-glutamate + ADP + phosphate + 2 H(+). Its function is as follows. Allows the formation of correctly charged Asn-tRNA(Asn) or Gln-tRNA(Gln) through the transamidation of misacylated Asp-tRNA(Asn) or Glu-tRNA(Gln) in organisms which lack either or both of asparaginyl-tRNA or glutaminyl-tRNA synthetases. The reaction takes place in the presence of glutamine and ATP through an activated phospho-Asp-tRNA(Asn) or phospho-Glu-tRNA(Gln). The sequence is that of Aspartyl/glutamyl-tRNA(Asn/Gln) amidotransferase subunit B from Streptococcus agalactiae serotype III (strain NEM316).